We begin with the raw amino-acid sequence, 554 residues long: Membrane protein insertase YidC (554 aa).

Transmembrane regions (helical) follow at residues 7 to 24, 362 to 382, 436 to 456, 475 to 495, and 510 to 530; these read VLWVIFFMSAVMLYDNWQ, FVGNWGWAIVLLTVLIKAVFF, LPVVIQIPVFISLYWVLLASV, PFFILPVLMAVSMFVQTSLNP, and PIAFSVMFFFFPAGLVLYYVV.

The protein belongs to the OXA1/ALB3/YidC family. Type 1 subfamily. As to quaternary structure, interacts with the Sec translocase complex via SecD. Specifically interacts with transmembrane segments of nascent integral membrane proteins during membrane integration.

The protein resides in the cell inner membrane. Required for the insertion and/or proper folding and/or complex formation of integral membrane proteins into the membrane. Involved in integration of membrane proteins that insert both dependently and independently of the Sec translocase complex, as well as at least some lipoproteins. Aids folding of multispanning membrane proteins. The sequence is that of Membrane protein insertase YidC from Burkholderia ambifaria (strain MC40-6).